The chain runs to 202 residues: Coiled-coil domain-containing protein mdt-28 (202 aa).

Composition is skewed to acidic residues over residues 1–15 and 28–45; these read MFEELDAEDGGEEQE and EDIDDILGDAPDLPDDEY. Positions 1–83 are disordered; that stretch reads MFEELDAEDG…NEDDEEPIEP (83 aa). Residues 159-184 are a coiled coil; the sequence is IEEENLDEAIERQETIIAAAREMLNS.

As to quaternary structure, interacts with mdt-6 and mdt-30. Ubiquitously expressed in tissues including epidermal, intestinal, pharyngeal and uterine, and is also expressed in vulval muscle cells and gut granules.

It is found in the nucleus. It localises to the cytoplasm. Its function is as follows. Plays a role in normal growth and development. The sequence is that of Coiled-coil domain-containing protein mdt-28 from Caenorhabditis elegans.